A 311-amino-acid polypeptide reads, in one-letter code: Ornithine carbamoyltransferase (311 aa).

Residues Ser57–Thr60, Gln84, Arg108, and His135–Gln138 contribute to the carbamoyl phosphate site. Residues Asn166, Asp230, and Ser234 to Met235 contribute to the L-ornithine site. Residues Cys270 to Leu271 and Arg298 contribute to the carbamoyl phosphate site.

The protein belongs to the aspartate/ornithine carbamoyltransferase superfamily. OTCase family.

It is found in the cytoplasm. The enzyme catalyses carbamoyl phosphate + L-ornithine = L-citrulline + phosphate + H(+). Its pathway is amino-acid biosynthesis; L-arginine biosynthesis; L-arginine from L-ornithine and carbamoyl phosphate: step 1/3. Reversibly catalyzes the transfer of the carbamoyl group from carbamoyl phosphate (CP) to the N(epsilon) atom of ornithine (ORN) to produce L-citrulline. The protein is Ornithine carbamoyltransferase of Carboxydothermus hydrogenoformans (strain ATCC BAA-161 / DSM 6008 / Z-2901).